Consider the following 631-residue polypeptide: 1-deoxy-D-xylulose-5-phosphate synthase (631 aa).

Thiamine diphosphate-binding positions include His-73, 113–115 (SHA), Asn-174, Tyr-285, and Glu-367. Asn-174 provides a ligand contact to Mg(2+).

It belongs to the transketolase family. DXPS subfamily. As to quaternary structure, homodimer. The cofactor is Mg(2+). Thiamine diphosphate is required as a cofactor.

It carries out the reaction D-glyceraldehyde 3-phosphate + pyruvate + H(+) = 1-deoxy-D-xylulose 5-phosphate + CO2. The protein operates within metabolic intermediate biosynthesis; 1-deoxy-D-xylulose 5-phosphate biosynthesis; 1-deoxy-D-xylulose 5-phosphate from D-glyceraldehyde 3-phosphate and pyruvate: step 1/1. Its function is as follows. Catalyzes the acyloin condensation reaction between C atoms 2 and 3 of pyruvate and glyceraldehyde 3-phosphate to yield 1-deoxy-D-xylulose-5-phosphate (DXP). The sequence is that of 1-deoxy-D-xylulose-5-phosphate synthase from Streptomyces sp. (strain CL190).